Consider the following 1358-residue polypeptide: Phosphoinositide 3-kinase regulatory subunit 4 (1358 aa).

Gly-2 carries N-myristoyl glycine lipidation. Positions 26 to 324 constitute a Protein kinase domain; it reads FEYDKSLGST…AFPEIFYTFL (299 aa). ATP contacts are provided by residues 32 to 40 and Lys-53; that span reads LGSTRFFKV. Asp-148 functions as the Proton acceptor in the catalytic mechanism. HEAT repeat units follow at residues 413 to 450, 458 to 495, 572 to 610, and 612 to 648; these read ILLDRITPYLLHFSNDSVPRVRAEALRTLTKVLALVQE, IYPEYILPGIAHLAQDDATIVRLAYAENIALLAETALR, KANDVLLSHMITFLNDKNDWHLRGAFFDSIVGVAAYVGW, and SSSILKPLLQQGLSDAEEFVIVKALNALTCMCQLGLL. Residues Ser-808, Ser-813, Ser-853, and Ser-865 each carry the phosphoserine modification. 6 WD repeats span residues 991–1030, 1040–1079, 1093–1134, 1139–1178, 1182–1223, and 1237–1278; these read EHKSAVNRIRVSDEHLLFATCSNDGTVKIWNSQKMEGKTT, RIGGRVKTLTFCQGSHYLAIASDNGAVQLLGIEASKLPKS, KEDG…NAWT, LKSGLITSFAVDIHQCWLCIGTSSGAMACWDMRFQLPISS, PSRA…RRLT, and PSPH…RSYV. A disordered region spans residues 1307–1326; the sequence is KQKVGPSDDTPRRGPESLPV. A compositionally biased stretch (basic and acidic residues) spans 1315–1326; that stretch reads DTPRRGPESLPV. Position 1316 is a phosphothreonine (Thr-1316). A WD 7 repeat occupies 1327–1358; the sequence is GHHDIITDIATFQTTQGFIVTASRDGIVKVWK.

It belongs to the protein kinase superfamily. Ser/Thr protein kinase family. In terms of assembly, component of the PI3K (PI3KC3/PI3K-III/class III phosphatidylinositol 3-kinase) complex the core of which is composed of the catalytic subunit PIK3C3, the regulatory subunit PIK3R4 and BECN1 associating with additional regulatory/auxiliary subunits to form alternative complex forms. Alternative complex forms containing a fourth regulatory subunit in a mutually exclusive manner are PI3K complex I (PI3KC3-C1) containing ATG14, and PI3K complex II (PI3KC3-C2) containing UVRAG. PI3KC3-C1 displays a V-shaped architecture with PIK3R4 serving as a bridge between PIK3C3 and the ATG14:BECN1 subcomplex. Both, PI3KC3-C1 and PI3KC3-C2, can associate with further regulatory subunits, such as RUBCN, SH3GLB1/Bif-1, AMBRA1 and NRBF2. PI3KC3-C1 probably associates with PIK3CB. Interacts with RAB7A in the presence of PIK3C3/VPS34. Interacts with NRBF2. Interacts with ARMC3. Mn(2+) serves as cofactor. In terms of processing, myristoylated. Probably autophosphorylated.

It localises to the late endosome. The protein localises to the cytoplasmic vesicle. The protein resides in the autophagosome. Its subcellular location is the membrane. The catalysed reaction is L-seryl-[protein] + ATP = O-phospho-L-seryl-[protein] + ADP + H(+). It catalyses the reaction L-threonyl-[protein] + ATP = O-phospho-L-threonyl-[protein] + ADP + H(+). Its function is as follows. Regulatory subunit of the PI3K complex that mediates formation of phosphatidylinositol 3-phosphate; different complex forms are believed to play a role in multiple membrane trafficking pathways: PI3KC3-C1 is involved in initiation of autophagosomes and PI3KC3-C2 in maturation of autophagosomes and endocytosis. Involved in regulation of degradative endocytic trafficking and cytokinesis, probably in the context of PI3KC3-C2. The polypeptide is Phosphoinositide 3-kinase regulatory subunit 4 (Pik3r4) (Mus musculus (Mouse)).